The primary structure comprises 419 residues: Gamma-glutamyl phosphate reductase (419 aa).

The protein belongs to the gamma-glutamyl phosphate reductase family.

It is found in the cytoplasm. It catalyses the reaction L-glutamate 5-semialdehyde + phosphate + NADP(+) = L-glutamyl 5-phosphate + NADPH + H(+). The protein operates within amino-acid biosynthesis; L-proline biosynthesis; L-glutamate 5-semialdehyde from L-glutamate: step 2/2. Its function is as follows. Catalyzes the NADPH-dependent reduction of L-glutamate 5-phosphate into L-glutamate 5-semialdehyde and phosphate. The product spontaneously undergoes cyclization to form 1-pyrroline-5-carboxylate. The protein is Gamma-glutamyl phosphate reductase of Marinomonas sp. (strain MWYL1).